A 152-amino-acid chain; its full sequence is Small ribosomal subunit protein uS13z/uS13y/uS13x (152 aa).

Residue S2 is modified to N-acetylserine.

It belongs to the universal ribosomal protein uS13 family.

It is found in the cytoplasm. In terms of biological role, located at the top of the head of the 40S subunit, it contacts several helices of the 18S rRNA. This Arabidopsis thaliana (Mouse-ear cress) protein is Small ribosomal subunit protein uS13z/uS13y/uS13x (RPS18A).